Consider the following 156-residue polypeptide: Ribosome maturation factor RimP (156 aa).

Belongs to the RimP family.

It is found in the cytoplasm. Functionally, required for maturation of 30S ribosomal subunits. In Gloeobacter violaceus (strain ATCC 29082 / PCC 7421), this protein is Ribosome maturation factor RimP.